The sequence spans 504 residues: MVAPGSVTSRLGSVFPFLLVLVDLQYEGAECGVNADVEKHLELGKKLLAAGQLADALSQFHAAVDGDPDNYIAYYRRATVFLAMGKSKAALPDLTKVIELKMDFTAARLQRGHLLLKQGKLDEAEDDFKKVLKSNPSENEEKEAQSQLVKSDEMQRLRSQALDAFESSDFTAAITFLDKILEVCVWDAELRELRAECFIKEGEPRKAISDLKASSKLKNDNTEAFYKISTLYYELGDHELSLSEVRECLKLDQDHKRCFAHYKQVKKLNKLIESAEELIKEGRYTDAISKYESVMKTEPGVHEYTIRSKERICHCFSKDEKPVEAIRVCSEVLQVEPDNVNALKDRAEAYLIEEMYDEAIQDYETAQEHNENDQQIREGLEKAQRLLKQSQRRDYYKILGVKRNAKKQEIIKAYRKLALQWHPDNFQNEEEKKKAEKKFIDIAAAKEVLSDPEMRKKFDDGEDPLDAESQQGGGGNPFHRSWNSWQGFSPFSSGGPFRFKFHFN.

Positions 1–31 (MVAPGSVTSRLGSVFPFLLVLVDLQYEGAEC) are cleaved as a signal peptide. 9 TPR repeats span residues 37-70 (VEKH…DPDN), 72-104 (IAYY…KMDF), 105-138 (TAAR…NPSE), 154-187 (MQRL…CVWD), 189-221 (ELRE…KNDN), 222-255 (TEAF…DQDH), 268-301 (LNKL…EPGV), 306-339 (IRSK…EPDN), and 340-373 (VNAL…NEND). An intrachain disulfide couples C248 to C258. S274 carries the post-translational modification Phosphoserine. The cysteines at positions 313 and 329 are disulfide-linked. Residues 375–393 (QIREGLEKAQRLLKQSQRR) form a flexible linker region. The 69-residue stretch at 394–462 (DYYKILGVKR…EMRKKFDDGE (69 aa)) folds into the J domain. The interval 451-481 (DPEMRKKFDDGEDPLDAESQQGGGGNPFHRS) is disordered.

In terms of assembly, interacts with EIF2AK4/GCN2; this interaction occurs under endoplasmic reticulum (ER) stress, hypothermic and amino acid starving stress conditions and inhibits EIF2AK4/GCN2 kinase activity. Interacts with EIF2AK3. Interacts with EIF2AK2. Forms a trimeric complex with DNAJB1 and HSPA8. Interacts with THAP12.

The protein localises to the endoplasmic reticulum. Involved in the unfolded protein response (UPR) during endoplasmic reticulum (ER) stress. Acts as a negative regulator of the EIF2AK4/GCN2 kinase activity by preventing the phosphorylation of eIF-2-alpha at 'Ser-52' and hence attenuating general protein synthesis under ER stress, hypothermic and amino acid starving stress conditions. Co-chaperone of HSPA8/HSC70, it stimulates its ATPase activity. May inhibit both the autophosphorylation of EIF2AK2/PKR and the ability of EIF2AK2 to catalyze phosphorylation of the EIF2A. May inhibit EIF2AK3/PERK activity. The protein is DnaJ homolog subfamily C member 3 (DNAJC3) of Bos taurus (Bovine).